We begin with the raw amino-acid sequence, 467 residues long: H(+)/Cl(-) exchange transporter ClcA (467 aa).

At 1–30 (MKSQTIPTRRVRGFRRAAVIRQLLSRDKTP) the chain is on the cytoplasmic side. Residues 31–67 (LTILLLASLTGVLAGLAGVAFEKAVAWVTAHRIEGLA) form a helical membrane-spanning segment. Residues 68-74 (QVAHIPW) lie on the Periplasmic side of the membrane. Residues 75-98 (LVWLLAFLFSALLAMVGYFLVRRF) traverse the membrane as a helical segment. The Cytoplasmic segment spans residues 99-106 (APEAGGSG). The Selectivity filter part_1 signature appears at 104-108 (GSGIP). Ser-105 contacts chloride. Positions 107 to 114 (IPEIEGAL) form an intramembrane region, helical. Topologically, residues 115–121 (EELRPVR) are cytoplasmic. The chain crosses the membrane as a helical span at residues 122–139 (WWRVLPVKFFGGMGTLGA). At 140–145 (GMVLGR) the chain is on the periplasmic side. Residues 144–148 (GREGP) carry the Selectivity filter part_2 motif. The helical transmembrane segment at 146–164 (EGPMVQMGGNIGRMVLDIF) threads the bilayer. At 165–174 (HRPDAEARHT) the chain is on the cytoplasmic side. Intramembrane regions (helical) lie at residues 175–187 (LLAT…LAAA) and 191–199 (PLAGILFII). At 200–212 (EEMRTQFHYNLIS) the chain is on the cytoplasmic side. The helical transmembrane segment at 213-230 (IKAVFTGVIMSTIVFRIF) threads the bilayer. Residues 231-250 (NGEKSVIEVGQLTDAPVYTL) lie on the Periplasmic side of the membrane. A helical membrane pass occupies residues 251 to 279 (WLYLLLGIIFGAVGPLFNRLVLGMQDVFA). At 280 to 285 (RIHGGN) the chain is on the cytoplasmic side. A helical membrane pass occupies residues 286 to 307 (TTRWVLLGGAIGGACGLLALWE). Over 308 to 327 (PAAAGGGFGLIPIAAAGNFT) the chain is Periplasmic. Residues 328-347 (VGMLLFIFIARVVTTVFCFS) traverse the membrane as a helical segment. The Cytoplasmic segment spans residues 348-352 (SGAPG). A Selectivity filter part_3 motif is present at residues 353-357 (GIFAP). The chain crosses the membrane as a helical span at residues 353 to 374 (GIFAPMLALGTLLGSAFGMACA). 2 residues coordinate chloride: Ile-354 and Phe-355. At 375–384 (AWFPQWHLQA) the chain is on the periplasmic side. The helical intramembrane region spans 385 to 399 (GTFAIAGMGALLAAS). The note=Loop between two helices intramembrane region spans 400–402 (VRA). The segment at residues 403 to 414 (PITGIVLVLEMT) is an intramembrane region (helical). The segment at residues 415 to 419 (DNYQL) is an intramembrane region (note=Loop between two helices). A helical membrane pass occupies residues 420 to 436 (ILPMIITCLGATLLAQF). The Cytoplasmic segment spans residues 437 to 467 (LGGKPLYSTILARTLAKQEAERQAQADGRNT). Tyr-443 serves as a coordination point for chloride.

This sequence belongs to the chloride channel (TC 2.A.49) family. ClcA subfamily. In terms of assembly, homodimer.

The protein resides in the cell inner membrane. The enzyme catalyses 2 chloride(in) + H(+)(out) = 2 chloride(out) + H(+)(in). Proton-coupled chloride transporter. Functions as antiport system and exchanges two chloride ions for 1 proton. Probably acts as an electrical shunt for an outwardly-directed proton pump that is linked to amino acid decarboxylation, as part of the extreme acid resistance (XAR) response. This is H(+)/Cl(-) exchange transporter ClcA from Cronobacter sakazakii (strain ATCC BAA-894) (Enterobacter sakazakii).